A 650-amino-acid chain; its full sequence is FAS-associated factor 1 (650 aa).

One can recognise a UBA domain in the interval 1–57; that stretch reads MASNMDREMILADFQACTGIENIDEAITLLEQNNWDLVAAINGVIPQENGILQSEYG. Residues 62–87 are disordered; it reads PGPAFNPASHPASAPTSSSSSAFRPV. Residues 68–83 are compositionally biased toward low complexity; sequence PASHPASAPTSSSSSA. The residue at position 320 (Ser-320) is a Phosphoserine. One can recognise a UBX domain in the interval 569-646; sequence NAEPVSKLRI…KLFPQETLFL (78 aa). Thr-580 is modified (phosphothreonine). At Ser-582 the chain carries Phosphoserine.

As to quaternary structure, interacts with CDT1 and ATPase VCP/p97. Interacts (via UBA domain) with FAS (via death domain). Interacts (via UBA domain) with NLRP12 (via DAPIN/PYRIN domain). As to expression, most abundant in testis, slightly less abundant in skeletal muscle and heart, followed by prostate, thymus, ovary, small intestine, and colon. Not detected in the peripheral blood leukocytes.

The protein localises to the nucleus. In terms of biological role, ubiquitin-binding protein. Required for the progression of DNA replication forks by targeting DNA replication licensing factor CDT1 for degradation. Potentiates but cannot initiate FAS-induced apoptosis. The chain is FAS-associated factor 1 (FAF1) from Homo sapiens (Human).